The chain runs to 646 residues: Peptidylprolyl isomerase domain and WD repeat-containing protein 1 (646 aa).

The tract at residues 1-50 (MATESGSDSQLRRRRRRDPEGSEKTELSEREPALAVAGSEENDDENEERW) is disordered. Ala2 carries the post-translational modification N-acetylalanine. Basic and acidic residues predominate over residues 17 to 32 (RDPEGSEKTELSEREP). WD repeat units follow at residues 88–126 (MHRD…IEFV), 131–170 (SHLG…MINM), 221–260 (LHVS…YKFP), and 278–319 (KCKA…RVFD). In terms of domain architecture, PPIase cyclophilin-type spans 490 to 645 (VSDSAIVHTS…EDVSIINITV (156 aa)).

This sequence belongs to the cyclophilin-type PPIase family. PPIL1 subfamily. As to quaternary structure, identified in the spliceosome C complex.

The protein localises to the nucleus. The enzyme catalyses [protein]-peptidylproline (omega=180) = [protein]-peptidylproline (omega=0). Inhibited by cyclosporin A (CsA). Its function is as follows. PPIase that catalyzes the cis-trans isomerization of proline imidic peptide bonds in oligopeptides and may therefore assist protein folding. May be involved in pre-mRNA splicing. The polypeptide is Peptidylprolyl isomerase domain and WD repeat-containing protein 1 (Mus musculus (Mouse)).